The primary structure comprises 200 residues: NADH-quinone oxidoreductase subunit C (200 aa).

This sequence belongs to the complex I 30 kDa subunit family. NDH-1 is composed of 14 different subunits. Subunits NuoB, C, D, E, F, and G constitute the peripheral sector of the complex.

Its subcellular location is the cell inner membrane. It carries out the reaction a quinone + NADH + 5 H(+)(in) = a quinol + NAD(+) + 4 H(+)(out). In terms of biological role, NDH-1 shuttles electrons from NADH, via FMN and iron-sulfur (Fe-S) centers, to quinones in the respiratory chain. The immediate electron acceptor for the enzyme in this species is believed to be ubiquinone. Couples the redox reaction to proton translocation (for every two electrons transferred, four hydrogen ions are translocated across the cytoplasmic membrane), and thus conserves the redox energy in a proton gradient. The protein is NADH-quinone oxidoreductase subunit C of Burkholderia mallei (strain NCTC 10247).